Reading from the N-terminus, the 496-residue chain is Histidine--tRNA ligase (496 aa).

The protein belongs to the class-II aminoacyl-tRNA synthetase family. As to quaternary structure, homodimer.

It is found in the cytoplasm. The enzyme catalyses tRNA(His) + L-histidine + ATP = L-histidyl-tRNA(His) + AMP + diphosphate + H(+). The protein is Histidine--tRNA ligase of Bartonella bacilliformis (strain ATCC 35685 / KC583 / Herrer 020/F12,63).